Here is a 494-residue protein sequence, read N- to C-terminus: UPF0371 protein SPCG_0344 (494 aa).

Belongs to the UPF0371 family.

The chain is UPF0371 protein SPCG_0344 from Streptococcus pneumoniae (strain CGSP14).